Consider the following 160-residue polypeptide: Transcription elongation factor GreA (160 aa).

This sequence belongs to the GreA/GreB family.

Its function is as follows. Necessary for efficient RNA polymerase transcription elongation past template-encoded arresting sites. The arresting sites in DNA have the property of trapping a certain fraction of elongating RNA polymerases that pass through, resulting in locked ternary complexes. Cleavage of the nascent transcript by cleavage factors such as GreA or GreB allows the resumption of elongation from the new 3'terminus. GreA releases sequences of 2 to 3 nucleotides. The polypeptide is Transcription elongation factor GreA (Francisella tularensis subsp. tularensis (strain FSC 198)).